We begin with the raw amino-acid sequence, 204 residues long: Fluoride-specific ion channel FluC 3 (204 aa).

Basic and acidic residues predominate over residues 1–16 (MRADESGPERESREPT). The tract at residues 1–53 (MRADESGPERESREPTHIPGAEPELGGEPTPRGEPGPGFEPGPGGEPAPSRAP) is disordered. Positions 32–46 (RGEPGPGFEPGPGGE) are enriched in pro residues. 4 consecutive transmembrane segments (helical) span residues 62-82 (VLAA…ALGL), 96-116 (FAVN…VLEI), 125-145 (PFAA…MVDT), and 158-178 (AFNV…GLAI). Positions 133 and 136 each coordinate Na(+).

This sequence belongs to the fluoride channel Fluc/FEX (TC 1.A.43) family.

The protein localises to the cell membrane. It catalyses the reaction fluoride(in) = fluoride(out). Its activity is regulated as follows. Na(+) is not transported, but it plays an essential structural role and its presence is essential for fluoride channel function. Fluoride-specific ion channel. Important for reducing fluoride concentration in the cell, thus reducing its toxicity. This Streptomyces avermitilis (strain ATCC 31267 / DSM 46492 / JCM 5070 / NBRC 14893 / NCIMB 12804 / NRRL 8165 / MA-4680) protein is Fluoride-specific ion channel FluC 3.